The sequence spans 71 residues: Translational regulator CsrA (71 aa).

Residues 50–71 (RIRHEKDGDVPEAAPGQGADPQ) form a disordered region.

The protein belongs to the CsrA/RsmA family. As to quaternary structure, homodimer; the beta-strands of each monomer intercalate to form a hydrophobic core, while the alpha-helices form wings that extend away from the core.

The protein resides in the cytoplasm. A key translational regulator that binds mRNA to regulate translation initiation and/or mRNA stability. Mediates global changes in gene expression, shifting from rapid growth to stress survival by linking envelope stress, the stringent response and the catabolite repression systems. Usually binds in the 5'-UTR; binding at or near the Shine-Dalgarno sequence prevents ribosome-binding, repressing translation, binding elsewhere in the 5'-UTR can activate translation and/or stabilize the mRNA. Its function is antagonized by small RNA(s). The sequence is that of Translational regulator CsrA from Halorhodospira halophila (strain DSM 244 / SL1) (Ectothiorhodospira halophila (strain DSM 244 / SL1)).